We begin with the raw amino-acid sequence, 509 residues long: tRNA-2-methylthio-N(6)-dimethylallyladenosine synthase (509 aa).

Residues 1 to 20 are disordered; sequence MNEKQKQESGQVNPADKTSE. One can recognise an MTTase N-terminal domain in the interval 66 to 184; it reads RKFYIRTYGC…LPELLSEAYL (119 aa). 6 residues coordinate [4Fe-4S] cluster: Cys75, Cys111, Cys145, Cys221, Cys225, and Cys228. Positions 207–437 constitute a Radical SAM core domain; sequence RNGKIKGWVN…NDLVKEISAK (231 aa). One can recognise a TRAM domain in the interval 440 to 503; it reads KEYEGRTVEV…TWSLDGVMAG (64 aa).

This sequence belongs to the methylthiotransferase family. MiaB subfamily. Monomer. [4Fe-4S] cluster serves as cofactor.

It is found in the cytoplasm. The enzyme catalyses N(6)-dimethylallyladenosine(37) in tRNA + (sulfur carrier)-SH + AH2 + 2 S-adenosyl-L-methionine = 2-methylsulfanyl-N(6)-dimethylallyladenosine(37) in tRNA + (sulfur carrier)-H + 5'-deoxyadenosine + L-methionine + A + S-adenosyl-L-homocysteine + 2 H(+). Catalyzes the methylthiolation of N6-(dimethylallyl)adenosine (i(6)A), leading to the formation of 2-methylthio-N6-(dimethylallyl)adenosine (ms(2)i(6)A) at position 37 in tRNAs that read codons beginning with uridine. In Bacillus velezensis (strain DSM 23117 / BGSC 10A6 / LMG 26770 / FZB42) (Bacillus amyloliquefaciens subsp. plantarum), this protein is tRNA-2-methylthio-N(6)-dimethylallyladenosine synthase.